The chain runs to 800 residues: Cation/H(+) antiporter 19 (800 aa).

The next 12 helical transmembrane spans lie at 30-50 (FALPLIILQIVLVVVFTRLLA), 60-77 (RVIAEIIGGILLGPSALG), 92-112 (LTVLDTLANIGLLFFLFLVGL), 127-147 (LLIAIAGISLPFIVGVGTSFV), 158-178 (QLPFIVFMGVALSITAFPVLA), 196-216 (MSAAGVNDVAAWILLALAIAL), 224-244 (LVSVWVLLCGTGFVIFAVVAI), 278-298 (FVTDTIGIHALFGAFVVGIVA), 315-335 (LVSGLLLPLYFAASGLKTDVT), 343-363 (WGLLVLVILTTCFGKIVGTVG), 375-395 (AVTLGFLMNTKGLVELIVLNI), and 408-428 (AILVLMALFTTFITTPIVMLI). The segment at 776–800 (ADTRPLVEEDAEYDQSSRDISDLTA) is disordered. Residues 790–800 (QSSRDISDLTA) are compositionally biased toward basic and acidic residues.

It belongs to the monovalent cation:proton antiporter 2 (CPA2) transporter (TC 2.A.37) family. CHX (TC 2.A.37.4) subfamily. Expressed in the whole plant but preferentially in pollen.

The protein localises to the membrane. Functionally, may operate as a cation/H(+) antiporter. The protein is Cation/H(+) antiporter 19 (CHX19) of Arabidopsis thaliana (Mouse-ear cress).